Here is a 423-residue protein sequence, read N- to C-terminus: ATP-citrate synthase alpha chain protein 2 (423 aa).

Residues Asn343, Thr345, and Arg376 each contribute to the citrate site.

Belongs to the succinate/malate CoA ligase beta subunit family. As to quaternary structure, heterooctamer of 4 alpha and 4 beta chains.

It localises to the cytoplasm. The protein localises to the cytosol. The enzyme catalyses oxaloacetate + acetyl-CoA + ADP + phosphate = citrate + ATP + CoA. ATP citrate-lyase is the primary enzyme responsible for the synthesis of cytosolic acetyl-CoA, used for the elongation of fatty acids and biosynthesis of isoprenoids, flavonoids and malonated derivatives. May supply substrate to the cytosolic acetyl-CoA carboxylase, which generates the malonyl-CoA used for the synthesis of a multitude of compounds, including very long chain fatty acids and flavonoids. Required for normal growth and development and elongation of C18 fatty acids to C20 to C24 fatty acids in seeds. In contrast to all known animal ACL enzymes having a homomeric structure, plant ACLs are composed of alpha and beta chains. This Arabidopsis thaliana (Mouse-ear cress) protein is ATP-citrate synthase alpha chain protein 2 (ACLA-2).